The primary structure comprises 265 residues: Secreted RxLR effector protein 16 (265 aa).

A signal peptide spans 1–19; that stretch reads MRGAFYIAIALLIVRSRTA. The RxLR-dEER signature appears at 46-61; sequence RYLRGGLALSATNEER. 3 N-linked (GlcNAc...) asparagine glycosylation sites follow: asparagine 170, asparagine 219, and asparagine 240.

It belongs to the RxLR effector family. In terms of processing, N-glycosylated. The putative N-glycosylation site at position 240 is essential for cell death-inducing activity.

Its subcellular location is the secreted. The protein resides in the host nucleus. In terms of biological role, effector that acts as an elicitor that induces cell death and promotes ROS accumulation in Nicotian benthamiana. RxLR16-triggered cell death is dependent on SGT1, HSP90 and RAR1, but independent of the somatic embryogenesis receptor-like kinase SERK3/BAK1, indicating that it acts independently of the detection of cell surface pattern recognition receptors. Enhances the expressional levels of defense-associated genes involved in the salicylic acid-, jasmonate acid-, and ethylene-mediated signal transduction, resulting in disease resistance. However, as some other Plasmopara viticola RxLR effectors including RxLR1, RxLR10, RxLR30 and RxLR25, can suppress defense responses and disease resistance induced by RxLR16, it may not trigger host cell death or immune responses during physiological infection under natural conditions. The polypeptide is Secreted RxLR effector protein 16 (Plasmopara viticola (Downy mildew of grapevine)).